Consider the following 1264-residue polypeptide: uncharacterized protein (1264 aa).

Positions 1–18 (MMRKYLILLILLPALAVG) are cleaved as a signal peptide. Residues 1215–1235 (SYTVLGVVVITILTMSIILCL) traverse the membrane as a helical segment.

Its subcellular location is the host membrane. This is an uncharacterized protein from Ostreid herpesvirus 1 (isolate France) (OsHV-1).